A 338-amino-acid polypeptide reads, in one-letter code: 1-aminocyclopropane-1-carboxylate deaminase (338 aa).

Position 51 is an N6-(pyridoxal phosphate)lysine (lysine 51). Serine 78 functions as the Nucleophile in the catalytic mechanism.

Belongs to the ACC deaminase/D-cysteine desulfhydrase family. In terms of assembly, homotrimer. It depends on pyridoxal 5'-phosphate as a cofactor.

It carries out the reaction 1-aminocyclopropane-1-carboxylate + H2O = 2-oxobutanoate + NH4(+). Catalyzes a cyclopropane ring-opening reaction, the irreversible conversion of 1-aminocyclopropane-1-carboxylate (ACC) to ammonia and alpha-ketobutyrate. Allows growth on ACC as a nitrogen source. The chain is 1-aminocyclopropane-1-carboxylate deaminase from Burkholderia pseudomallei (strain 1710b).